Consider the following 205-residue polypeptide: Holliday junction branch migration complex subunit RuvA (205 aa).

The domain I stretch occupies residues 1–64; that stretch reads MIAHLRGELV…EDALTLYGFL (64 aa). The tract at residues 65 to 143 is domain II; it reads TQAEYDLFEL…AVPAGGGGVP (79 aa). Residues 144 to 153 form a flexible linker region; it reads DGLPVAVAPA. Residues 153–205 form a domain III region; sequence AGDAWAEASEALIALGYSRGEAAAALARVRAEAGEAPSVETLVRLALKQLYRG.

The protein belongs to the RuvA family. As to quaternary structure, homotetramer. Forms an RuvA(8)-RuvB(12)-Holliday junction (HJ) complex. HJ DNA is sandwiched between 2 RuvA tetramers; dsDNA enters through RuvA and exits via RuvB. An RuvB hexamer assembles on each DNA strand where it exits the tetramer. Each RuvB hexamer is contacted by two RuvA subunits (via domain III) on 2 adjacent RuvB subunits; this complex drives branch migration. In the full resolvosome a probable DNA-RuvA(4)-RuvB(12)-RuvC(2) complex forms which resolves the HJ.

Its subcellular location is the cytoplasm. Functionally, the RuvA-RuvB-RuvC complex processes Holliday junction (HJ) DNA during genetic recombination and DNA repair, while the RuvA-RuvB complex plays an important role in the rescue of blocked DNA replication forks via replication fork reversal (RFR). RuvA specifically binds to HJ cruciform DNA, conferring on it an open structure. The RuvB hexamer acts as an ATP-dependent pump, pulling dsDNA into and through the RuvAB complex. HJ branch migration allows RuvC to scan DNA until it finds its consensus sequence, where it cleaves and resolves the cruciform DNA. The polypeptide is Holliday junction branch migration complex subunit RuvA (Symbiobacterium thermophilum (strain DSM 24528 / JCM 14929 / IAM 14863 / T)).